A 252-amino-acid chain; its full sequence is Adenosylcobinamide-GDP ribazoletransferase (252 aa).

The next 7 helical transmembrane spans lie at 4–24 (LFKGLMMSLSMFTIIPMPYVE), 38–58 (PIIGLIVGCVWFLGYKLINYL), 60–80 (ISIVLKSALIMIIPFIITGML), 113–133 (FSVISVIILFFIQFGAVHSFL), 141–161 (ILMFLPIISRNIVAYFFITII), 190–210 (LVCILFGSILGYIGIAILLIV), and 232–252 (VAGFSLVVGEIVGLFSACLFT).

This sequence belongs to the CobS family. The cofactor is Mg(2+).

The protein resides in the cell membrane. It catalyses the reaction alpha-ribazole + adenosylcob(III)inamide-GDP = adenosylcob(III)alamin + GMP + H(+). It carries out the reaction alpha-ribazole 5'-phosphate + adenosylcob(III)inamide-GDP = adenosylcob(III)alamin 5'-phosphate + GMP + H(+). It functions in the pathway cofactor biosynthesis; adenosylcobalamin biosynthesis; adenosylcobalamin from cob(II)yrinate a,c-diamide: step 7/7. Its function is as follows. Joins adenosylcobinamide-GDP and alpha-ribazole to generate adenosylcobalamin (Ado-cobalamin). Also synthesizes adenosylcobalamin 5'-phosphate from adenosylcobinamide-GDP and alpha-ribazole 5'-phosphate. This is Adenosylcobinamide-GDP ribazoletransferase from Clostridium botulinum (strain Alaska E43 / Type E3).